The sequence spans 159 residues: Ribosomal RNA large subunit methyltransferase H (159 aa).

S-adenosyl-L-methionine-binding positions include leucine 76, glycine 108, and 127-132; that span reads FSKMTF.

Belongs to the RNA methyltransferase RlmH family. In terms of assembly, homodimer.

The protein localises to the cytoplasm. The enzyme catalyses pseudouridine(1915) in 23S rRNA + S-adenosyl-L-methionine = N(3)-methylpseudouridine(1915) in 23S rRNA + S-adenosyl-L-homocysteine + H(+). In terms of biological role, specifically methylates the pseudouridine at position 1915 (m3Psi1915) in 23S rRNA. The protein is Ribosomal RNA large subunit methyltransferase H of Clostridium botulinum (strain Langeland / NCTC 10281 / Type F).